The sequence spans 311 residues: Ribosomal RNA large subunit methyltransferase F (311 aa).

The protein belongs to the methyltransferase superfamily. METTL16/RlmF family.

It is found in the cytoplasm. The enzyme catalyses adenosine(1618) in 23S rRNA + S-adenosyl-L-methionine = N(6)-methyladenosine(1618) in 23S rRNA + S-adenosyl-L-homocysteine + H(+). Functionally, specifically methylates the adenine in position 1618 of 23S rRNA. This Pectobacterium carotovorum subsp. carotovorum (strain PC1) protein is Ribosomal RNA large subunit methyltransferase F.